The following is a 525-amino-acid chain: Golgi resident protein GCP60 (525 aa).

The residue at position 2 (A2) is an N-acetylalanine. The segment at 12-68 (VSLDGLTLSPDSEERPGAEGAPPQTPPSSAPGNGLGSGASGQQREPGEAAAEGAAEE) is disordered. At S13 the chain carries Phosphoserine. T18 is subject to Phosphothreonine. S20 and S40 each carry phosphoserine. The span at 52–64 (GQQREPGEAAAEG) shows a compositional bias: low complexity. Residues 80-171 (LEELYGLALR…LNKCCPLLSA (92 aa)) form the ACB domain. Residues 169–254 (LSAYVASHRI…AALNSQTAVQ (86 aa)) adopt a coiled-coil conformation. Residues 180–226 (KEEEEKRRKAEEERRQREEEERERLQKEEEKRKREKEDRLRREEEER) form a disordered region. The tract at residues 238–305 (QQKQQIMAAL…QQQAALQKQQ (68 aa)) is q domain; Interaction with PI4KB, TBC1D22A and TBC1D22B. Polar residues predominate over residues 319–336 (KVNTAGASDTLSVNGQAK). The disordered stretch occupies residues 319 to 346 (KVNTAGASDTLSVNGQAKTHTENSEKVL). A compositionally biased stretch (basic and acidic residues) spans 337-346 (THTENSEKVL). Positions 381-523 (KEKIRQDADS…SKSVYYRVYY (143 aa)) constitute a GOLD domain. Residues 448-470 (SDEEEEEEENVTCEEKAKKNANK) are a coiled coil.

In terms of assembly, homodimer. Interacts with the C-terminal cytoplasmic domain of giantin/GOLGB1. Interacts with PBR and PKA regulatory subunit RI-alpha. Does not interact with PKA regulatory subunit RI-beta nor PKA regulatory subunit RII-alpha. Interacts (via Q domain) with PI4KB (via N-terminus). Interacts (via Q domain) with TBC1D22A and TBC1D22B; interactions with PI4KB and with TBC1D22A and TBC1D22B are mutually exclusive. Interacts with C10ORF76 and RAB11B. As to expression, expressed in brain (hippocampus, olfactory bulb, neuronal and glial cells of the cortex), eye, submaxillary gland, testis (interstitial and tubular compartments), ovary (granulosa cells, theca cells at late stages and primary follicles), adrenal gland (fasciculata and glomerulosa cells), heart, liver, and steroidogenic cell lines.

The protein localises to the golgi apparatus membrane. It localises to the mitochondrion. Involved in the maintenance of Golgi structure by interacting with giantin, affecting protein transport between the endoplasmic reticulum and Golgi. Involved in hormone-induced steroid biosynthesis in testicular Leydig cells. Recruits PI4KB to the Golgi apparatus membrane; enhances the enzyme activity of PI4KB activity via its membrane recruitment thereby increasing the local concentration of the substrate in the vicinity of the kinase. This Mus musculus (Mouse) protein is Golgi resident protein GCP60 (Acbd3).